The primary structure comprises 273 residues: Formamidopyrimidine-DNA glycosylase (273 aa).

Pro-2 acts as the Schiff-base intermediate with DNA in catalysis. Glu-3 serves as the catalytic Proton donor. Lys-58 serves as the catalytic Proton donor; for beta-elimination activity. 3 residues coordinate DNA: His-91, Arg-110, and Arg-153. The FPG-type zinc finger occupies 238-272; it reads KVYGKEGQPCPRCGEDFVKIKICGRGTTYCLHCQK. Residue Arg-262 is the Proton donor; for delta-elimination activity of the active site.

The protein belongs to the FPG family. Monomer. The cofactor is Zn(2+).

It carries out the reaction Hydrolysis of DNA containing ring-opened 7-methylguanine residues, releasing 2,6-diamino-4-hydroxy-5-(N-methyl)formamidopyrimidine.. The catalysed reaction is 2'-deoxyribonucleotide-(2'-deoxyribose 5'-phosphate)-2'-deoxyribonucleotide-DNA = a 3'-end 2'-deoxyribonucleotide-(2,3-dehydro-2,3-deoxyribose 5'-phosphate)-DNA + a 5'-end 5'-phospho-2'-deoxyribonucleoside-DNA + H(+). Its function is as follows. Involved in base excision repair of DNA damaged by oxidation or by mutagenic agents. Acts as a DNA glycosylase that recognizes and removes damaged bases. Has a preference for oxidized purines, such as 7,8-dihydro-8-oxoguanine (8-oxoG). Has AP (apurinic/apyrimidinic) lyase activity and introduces nicks in the DNA strand. Cleaves the DNA backbone by beta-delta elimination to generate a single-strand break at the site of the removed base with both 3'- and 5'-phosphates. The polypeptide is Formamidopyrimidine-DNA glycosylase (Lactobacillus delbrueckii subsp. bulgaricus (strain ATCC BAA-365 / Lb-18)).